The sequence spans 422 residues: MFSKDKLPVILFLFLAGVINYLDRSALSIAAPFIQDDLTLSATQMGLIFSSFSIGYAIFNFLGGVASDRYGAKLTLFVAMVVWSLFSGAVALAFGFVSLLIIRILFGMGEGPLSATINKMVNNWFPPTQRASVIGVTNSGTPLGGAISGPIVGMIAVAFSWKVSFVLIMIIGLIWAVLWFKFVKEKPQETIKEAPAIKAETSPGEKIPLTFYLKQKTVLFTAFAFFAYNYILFFFLTWFPSYLVDERGLSVESMSVITVIPWILGFIGLAAGGFVSDYVYKKTARKGVLFSRKVVLVTCLFSSAVLIGFAGLVATTAGAVTLVALSVFFLYLTGAIYWAVIQDVVDQNNVGSVGGFMHFLANTAGIIGPALTGFIVDQTGTFSGAFLLAGGLAVFASLAVIRFVRPIIGKPAGTEAENPVSY.

The next 11 helical transmembrane spans lie at 9–29 (VILF…ALSI), 45–65 (MGLI…LGGV), 82–102 (VWSL…LLII), 141–161 (TPLG…AFSW), 163–183 (VSFV…FKFV), 219–239 (LFTA…LTWF), 256–276 (VITV…GFVS), 294–314 (VVLV…GLVA), 321–341 (TLVA…WAVI), 356–376 (FMHF…GFIV), and 381–401 (TFSG…LAVI).

It belongs to the major facilitator superfamily. Phthalate permease family.

It is found in the cell membrane. It catalyses the reaction aldehydo-D-glucuronate(in) + H(+)(in) = aldehydo-D-glucuronate(out) + H(+)(out). The enzyme catalyses aldehydo-D-galacturonate(out) + H(+)(out) = aldehydo-D-galacturonate(in) + H(+)(in). Functionally, transport of aldohexuronates such as D-glucuronate and D-galacturonate. This Bacillus subtilis (strain 168) protein is Hexuronate transporter.